The following is a 573-amino-acid chain: Putative cytochrome c oxidase subunit 1-beta (573 aa).

A helical membrane pass occupies residues 53 to 73 (VIGHLYLATSFGFFLLGGVLA). His100 contributes to the Fe(II)-heme a binding site. 6 helical membrane-spanning segments follow: residues 103–123 (IMML…IMPL), 141–161 (WMYL…GGAA), 188–208 (GLVV…STII), 227–247 (ILFT…ALLM), 272–292 (LFWF…FGIV), and 304–324 (IFGY…SAVV). Cu cation is bound by residues His278 and Tyr282. The segment at residues 278-282 (HPEVY) is a cross-link (1'-histidyl-3'-tyrosine (His-Tyr)). 2 residues coordinate Cu cation: His327 and His328. The next 2 membrane-spanning stretches (helical) occupy residues 329–349 (MFAT…LIAV) and 373–393 (MLWA…GVLI). Position 411 (His411) interacts with heme a3. 3 helical membrane passes run 412 to 432 (LHYV…YFWW), 447 to 467 (IHFW…HWLG), and 490 to 510 (ISSI…YNVW). Residue His413 coordinates Fe(II)-heme a.

This sequence belongs to the heme-copper respiratory oxidase family. In terms of assembly, associates with subunits II, III and IV to form cytochrome c oxidase. It depends on Cu(2+) as a cofactor. Heme serves as cofactor.

It localises to the cell membrane. It carries out the reaction 4 Fe(II)-[cytochrome c] + O2 + 8 H(+)(in) = 4 Fe(III)-[cytochrome c] + 2 H2O + 4 H(+)(out). It participates in energy metabolism; oxidative phosphorylation. Cytochrome c oxidase is the component of the respiratory chain that catalyzes the reduction of oxygen to water. Subunits 1-3 form the functional core of the enzyme complex. CO I is the catalytic subunit of the enzyme. Electrons originating in cytochrome c are transferred via the copper A center of subunit 2 and heme A of subunit 1 to the bimetallic center formed by heme A3 and copper B. The polypeptide is Putative cytochrome c oxidase subunit 1-beta (ctaD2) (Streptomyces coelicolor (strain ATCC BAA-471 / A3(2) / M145)).